A 472-amino-acid chain; its full sequence is Sodium-coupled neutral amino acid transporter 5 (472 aa).

N-acetylmethionine is present on Met-1. Residues 1-48 are Cytoplasmic-facing; that stretch reads MELQDPKMNGALPSDAVGYRQEREGFLPSRGPAPGSKPVQFMDFEGKT. A helical membrane pass occupies residues 49-71; sequence SFGMSVFNLSNAIMGSGILGLAY. Topologically, residues 72–87 are extracellular; it reads AMAHTGVIFFLALLLC. Residues 88–108 form a helical membrane-spanning segment; it reads IALLSSYSIHLLLTCAGIAGI. Residues 109-125 lie on the Cytoplasmic side of the membrane; that stretch reads RAYEQLGQRAFGPAGKV. A helical transmembrane segment spans residues 126–146; that stretch reads VVATVICLHNVGAMSSYLFII. Residues 147-166 lie on the Extracellular side of the membrane; it reads KSELPLVIGTFLYMDPEGDW. A helical transmembrane segment spans residues 167–187; the sequence is FLKGNLLIIIVSVLIILPLAL. Residues 188–192 are Cytoplasmic-facing; sequence MKHLG. Residues 193–213 form a helical membrane-spanning segment; sequence YLGYTSGLSLTCMLFFLVSVI. Over 214–257 the chain is Extracellular; it reads YKKFQLGCAIGHNETAMESEALVGLPSQGLNSSCEAQMFTVDSQ. Residues Cys-221 and Cys-247 are joined by a disulfide bond. The N-linked (GlcNAc...) asparagine glycan is linked to Asn-226. The helical transmembrane segment at 258-278 threads the bilayer; it reads MSYTVPIMAFAFVCHPEVLPI. The Cytoplasmic portion of the chain corresponds to 279 to 295; that stretch reads YTELCRPSKRRMQAVAN. Residues 296-316 traverse the membrane as a helical segment; it reads VSIGAMFCMYGLTATFGYLTF. At 317 to 334 the chain is on the extracellular side; the sequence is YSSVKAEMLHMYSQKDPL. The helical transmembrane segment at 335-355 threads the bilayer; it reads ILCVRLAVLLAVTLTVPVVLF. The Cytoplasmic portion of the chain corresponds to 356 to 376; that stretch reads PIRRALQQLLFPGKAFSWPRH. The chain crosses the membrane as a helical span at residues 377 to 397; sequence VAIALILLVLVNVLVICVPTI. Residues 398–399 lie on the Extracellular side of the membrane; sequence RD. Residues 400–420 form a helical membrane-spanning segment; the sequence is IFGVIGSTSAPSLIFILPSIF. Residues 421 to 439 are Cytoplasmic-facing; sequence YLRIVPSEVEPFLSWPKIQ. A helical membrane pass occupies residues 440–460; the sequence is ALCFGVLGVLFMAVSLGFMFA. Over 461–472 the chain is Extracellular; it reads NWATGQSRMSGH.

It belongs to the amino acid/polyamine transporter 2 family. As to expression, predominantly expressed in stomach, brain, liver, lung and intestinal tract.

It is found in the cell membrane. It catalyses the reaction L-serine(out) + Na(+)(out) + H(+)(in) = L-serine(in) + Na(+)(in) + H(+)(out). The catalysed reaction is L-alanine(out) + Na(+)(out) + H(+)(in) = L-alanine(in) + Na(+)(in) + H(+)(out). The enzyme catalyses glycine(out) + Na(+)(out) + H(+)(in) = glycine(in) + Na(+)(in) + H(+)(out). It carries out the reaction L-glutamine(out) + Na(+)(out) + H(+)(in) = L-glutamine(in) + Na(+)(in) + H(+)(out). It catalyses the reaction L-asparagine(out) + Na(+)(out) + H(+)(in) = L-asparagine(in) + Na(+)(in) + H(+)(out). The catalysed reaction is L-histidine(out) + Na(+)(out) + H(+)(in) = L-histidine(in) + Na(+)(in) + H(+)(out). The enzyme catalyses L-cysteine(out) + Na(+)(out) + H(+)(in) = L-cysteine(in) + Na(+)(in) + H(+)(out). With respect to regulation, not inhibited by lithium. Partial allosteric regulation on ions sodium binding. Its function is as follows. Symporter that cotransports neutral amino acids and sodium ions, coupled to an H(+) antiporter activity. Releases L-glutamine and glycine from astroglial cells and may participate in the glutamate/GABA-L-glutamine cycle and the NMDA receptors activation. In addition, contributes significantly to L-glutamine uptake in retina, namely in ganglion and Mueller cells therefore, participates in the retinal glutamate-glutamine cycle. The transport activity is pH sensitive and Li(+) tolerant. Moreover functions in both direction and is associated with large uncoupled fluxes of protons. The transport is electroneutral coupled to the cotransport of 1 Na(+) and the antiport of 1 H(+). May have a particular importance for modulation of net hepatic glutamine flux. The protein is Sodium-coupled neutral amino acid transporter 5 (SLC38A5) of Homo sapiens (Human).